Consider the following 765-residue polypeptide: E3 ubiquitin-protein ligase SlrP (765 aa).

The interaction with target proteins stretch occupies residues 1–453 (MFNITNIQST…YQGPRVLFAM (453 aa)). 10 LRR repeats span residues 200-219 (QITTLILDNNELKSLPENLQ), 221-242 (NIKTLYANSNQLTSIPATLPDT), 243-262 (IQEMELSINRITELPERLPS), 263-284 (ALQSLDLFHNKISCLPENLPEE), 285-305 (LRYLSVYDNSIRTLPAHLPSE), 306-325 (ITHLNVQSNSLTALPETLPP), 326-346 (GLKTLEAGENALTSLPASLPP), 347-368 (ELQVLDVSKNQITVLPETLPPT), 369-389 (ITTLDVSRNALTNLPENLPAA), and 390-410 (LQIMQASRNNLVRLPESLPHF). A linker region spans residues 454–461 (GDFSIVRV). Positions 462–765 (TRPLHQAVQG…VSSLMSAYWR (304 aa)) are E3 ubiquitin-protein ligase catalytic domain. The region spanning 464 to 758 (PLHQAVQGWL…NILLKKEVSS (295 aa)) is the NEL domain. Cys546 functions as the Glycyl thioester intermediate in the catalytic mechanism.

The protein belongs to the LRR-containing bacterial E3 ligase family. In terms of assembly, interacts with host TXN. Post-translationally, ubiquitinated in the presence of host E1 ubiquitin-activating enzyme, E2 ubiquitin-conjugating enzyme and ubiquitin.

It localises to the secreted. The protein localises to the host cytoplasm. It catalyses the reaction S-ubiquitinyl-[E2 ubiquitin-conjugating enzyme]-L-cysteine + [acceptor protein]-L-lysine = [E2 ubiquitin-conjugating enzyme]-L-cysteine + N(6)-ubiquitinyl-[acceptor protein]-L-lysine.. Functionally, effector proteins function to alter host cell physiology and promote bacterial survival in host tissues. This protein is an E3 ubiquitin ligase that interferes with host's ubiquitination pathway. Can ubiquitinate both ubiquitin and host TXN (thioredoxin). Leads to significant decrease of thioredoxin activity and increase of host cell death. This Salmonella typhimurium (strain 14028s / SGSC 2262) protein is E3 ubiquitin-protein ligase SlrP (slrP).